A 201-amino-acid polypeptide reads, in one-letter code: Large ribosomal subunit protein uL4 (201 aa).

Residues 46 to 71 form a disordered region; sequence QKTRAEVIGSGKKPWRQKGTGRARAG.

It belongs to the universal ribosomal protein uL4 family. In terms of assembly, part of the 50S ribosomal subunit.

In terms of biological role, one of the primary rRNA binding proteins, this protein initially binds near the 5'-end of the 23S rRNA. It is important during the early stages of 50S assembly. It makes multiple contacts with different domains of the 23S rRNA in the assembled 50S subunit and ribosome. Its function is as follows. Forms part of the polypeptide exit tunnel. The sequence is that of Large ribosomal subunit protein uL4 from Shewanella sediminis (strain HAW-EB3).